We begin with the raw amino-acid sequence, 127 residues long: Small ribosomal subunit protein bS16 (127 aa).

Residues 80–127 (GLKKRPTRNNPHKGEPGKKAQERIAAAKQAAEEAAAAKTESAPISEEV) are disordered. The span at 81-90 (LKKRPTRNNP) shows a compositional bias: basic residues. Basic and acidic residues predominate over residues 91 to 101 (HKGEPGKKAQE). A compositionally biased stretch (low complexity) spans 102–121 (RIAAAKQAAEEAAAAKTESA).

The protein belongs to the bacterial ribosomal protein bS16 family.

In Bartonella henselae (strain ATCC 49882 / DSM 28221 / CCUG 30454 / Houston 1) (Rochalimaea henselae), this protein is Small ribosomal subunit protein bS16.